The primary structure comprises 171 residues: tRNA-specific adenosine deaminase (171 aa).

Residues 6 to 133 form the CMP/dCMP-type deaminase domain; sequence EEQTYFMQEA…ERLNHRVQVE (128 aa). His-57 serves as a coordination point for Zn(2+). Glu-59 functions as the Proton donor in the catalytic mechanism. Zn(2+) is bound by residues Cys-87 and Cys-90.

Belongs to the cytidine and deoxycytidylate deaminase family. Homodimer. Requires Zn(2+) as cofactor.

It carries out the reaction adenosine(34) in tRNA + H2O + H(+) = inosine(34) in tRNA + NH4(+). Its function is as follows. Catalyzes the deamination of adenosine to inosine at the wobble position 34 of tRNA(Arg2). In Streptococcus pyogenes serotype M3 (strain ATCC BAA-595 / MGAS315), this protein is tRNA-specific adenosine deaminase.